A 515-amino-acid polypeptide reads, in one-letter code: Monocarboxylate transporter 10 (515 aa).

A disordered region spans residues 1–48; sequence MVLSQEEPDSARGTSEAQPLGPAPTGAAPPPGPGPSDSPEAAVEKVEV. Residues 1 to 66 lie on the Cytoplasmic side of the membrane; it reads MVLSQEEPDS…EPHEPPEPPE (66 aa). Low complexity predominate over residues 17–26; that stretch reads AQPLGPAPTG. Residues 27-36 are compositionally biased toward pro residues; that stretch reads AAPPPGPGPS. The chain crosses the membrane as a helical span at residues 67 to 87; sequence GGWGWLVMLAAMWCNGSVFGI. Topologically, residues 88-114 are extracellular; it reads QNACGVLFVSMLETFGSKDDDKMVFKT. Residues 115 to 135 traverse the membrane as a helical segment; the sequence is AWVGSLSMGMIFFCCPIVSVF. Residues 136–144 are Cytoplasmic-facing; it reads TDLFGCRKT. A helical transmembrane segment spans residues 145–165; sequence AVVGAAVGFVGLMSSSFVSSI. Topologically, residues 166 to 171 are extracellular; sequence EPLYLT. The chain crosses the membrane as a helical span at residues 172–192; it reads YGIIFACGCSFAYQPSLVILG. Residues 193-200 are Cytoplasmic-facing; that stretch reads HYFKKRLG. The chain crosses the membrane as a helical span at residues 201–221; sequence LVNGIVTAGSSVFTILLPLLL. Over 222–228 the chain is Extracellular; it reads RVLIDSV. The chain crosses the membrane as a helical span at residues 229–249; it reads GLFYTLRVLCIFMFVLFLAGF. Residues 250 to 291 lie on the Cytoplasmic side of the membrane; sequence TYRPLATSTKDKESGGSGSSLFSRKKFSPPKKIFNFAIFKVT. S263 carries the post-translational modification Phosphoserine. Residues 292–312 form a helical membrane-spanning segment; sequence AYAVWAVGIPLALFGYFVPYV. At 313-329 the chain is on the extracellular side; that stretch reads HLMKHVNERFQDEKNKE. A helical transmembrane segment spans residues 330-350; the sequence is VVLMCIGVTSGVGRLLFGRIA. Position 351 (D351) is a topological domain, cytoplasmic. The chain crosses the membrane as a helical span at residues 352 to 372; the sequence is YVPGVKKVYLQVLSFFFIGLM. The Extracellular portion of the chain corresponds to 373–396; it reads SMMIPLCSIFGALIAVCLIMGLFD. Residues 397–417 traverse the membrane as a helical segment; that stretch reads GCFISIMAPIAFELVGAQDVS. The Cytoplasmic portion of the chain corresponds to 418–419; the sequence is QA. Residues 420–440 traverse the membrane as a helical segment; it reads IGFLLGFMSIPMTVGPPIAGL. Residues 441-451 are Extracellular-facing; that stretch reads LRDKLGSYDVA. A helical membrane pass occupies residues 452–472; it reads FYLAGVPPLIGGAVLCFIPWI. The Cytoplasmic segment spans residues 473–515; sequence HSKKQREISKTTGKEKMEKMLENQNSLLSSSSGMFKKESDSII. 4 positions are modified to phosphoserine: S498, S501, S503, and S504.

Belongs to the major facilitator superfamily. Monocarboxylate porter (TC 2.A.1.13) family. In terms of processing, not N-glycosylated. In terms of tissue distribution, strongly expressed in kidney and skeletal muscle and at lower level in placenta and heart.

It localises to the cell membrane. Its subcellular location is the basolateral cell membrane. It carries out the reaction 3,3',5-triiodo-L-thyronine(out) = 3,3',5-triiodo-L-thyronine(in). The enzyme catalyses L-thyroxine(out) = L-thyroxine(in). It catalyses the reaction L-tryptophan(in) = L-tryptophan(out). The catalysed reaction is L-tyrosine(in) = L-tyrosine(out). It carries out the reaction L-phenylalanine(in) = L-phenylalanine(out). Sodium- and proton-independent thyroid hormones and aromatic acids transporter. Mediates both uptake and efflux of 3,5,3'-triiodothyronine (T3) and 3,5,3',5'-tetraiodothyronine (T4) with high affinity, suggesting a role in the homeostasis of thyroid hormone levels. Responsible for low affinity bidirectional transport of the aromatic amino acids, such as phenylalanine, tyrosine, tryptophan and L-3,4-dihydroxyphenylalanine (L-dopa). Plays an important role in homeostasis of aromatic amino acids. This Homo sapiens (Human) protein is Monocarboxylate transporter 10 (SLC16A10).